The following is a 466-amino-acid chain: Asparagine--tRNA ligase (466 aa).

This sequence belongs to the class-II aminoacyl-tRNA synthetase family. As to quaternary structure, homodimer.

The protein resides in the cytoplasm. It carries out the reaction tRNA(Asn) + L-asparagine + ATP = L-asparaginyl-tRNA(Asn) + AMP + diphosphate + H(+). This Vibrio parahaemolyticus serotype O3:K6 (strain RIMD 2210633) protein is Asparagine--tRNA ligase.